Consider the following 260-residue polypeptide: UPF0246 protein SCO2297 (260 aa).

The protein belongs to the UPF0246 family.

In Streptomyces coelicolor (strain ATCC BAA-471 / A3(2) / M145), this protein is UPF0246 protein SCO2297.